A 545-amino-acid chain; its full sequence is Glucose-6-phosphate isomerase (545 aa).

The active-site Proton donor is the E351. Residues H382 and K510 contribute to the active site.

Belongs to the GPI family.

Its subcellular location is the cytoplasm. The catalysed reaction is alpha-D-glucose 6-phosphate = beta-D-fructose 6-phosphate. The protein operates within carbohydrate biosynthesis; gluconeogenesis. Its pathway is carbohydrate degradation; glycolysis; D-glyceraldehyde 3-phosphate and glycerone phosphate from D-glucose: step 2/4. Catalyzes the reversible isomerization of glucose-6-phosphate to fructose-6-phosphate. In Shewanella amazonensis (strain ATCC BAA-1098 / SB2B), this protein is Glucose-6-phosphate isomerase.